A 180-amino-acid chain; its full sequence is F17 fimbrial protein (180 aa).

The signal sequence occupies residues 1–21; it reads MQKIQFILGILAAASSSATLA. A disulfide bond links Cys-37 and Cys-77.

The protein belongs to the fimbrial protein family.

Its subcellular location is the fimbrium. Fimbriae (also called pili), polar filaments radiating from the surface of the bacterium to a length of 0.5-1.5 micrometers and numbering 100-300 per cell, enable bacteria to colonize the epithelium of specific host organs. The sequence is that of F17 fimbrial protein (F17a-A) from Escherichia coli.